Reading from the N-terminus, the 251-residue chain is PF03932 family protein CutC (251 aa).

The protein belongs to the CutC family.

The protein resides in the cytoplasm. The chain is PF03932 family protein CutC from Edwardsiella ictaluri (strain 93-146).